The sequence spans 287 residues: Small ribosomal subunit biogenesis GTPase RsgA (287 aa).

The CP-type G domain maps to 61–218; that stretch reads SSELIRPTVA…LVDTPGFTTL (158 aa). Residues 110 to 113 and 161 to 169 each bind GTP; these read NKED and GPSGAGKST. Zn(2+) contacts are provided by Cys-242, Cys-247, His-249, and Cys-255.

This sequence belongs to the TRAFAC class YlqF/YawG GTPase family. RsgA subfamily. In terms of assembly, monomer. Associates with 30S ribosomal subunit, binds 16S rRNA. Requires Zn(2+) as cofactor.

It is found in the cytoplasm. One of several proteins that assist in the late maturation steps of the functional core of the 30S ribosomal subunit. Helps release RbfA from mature subunits. May play a role in the assembly of ribosomal proteins into the subunit. Circularly permuted GTPase that catalyzes slow GTP hydrolysis, GTPase activity is stimulated by the 30S ribosomal subunit. This chain is Small ribosomal subunit biogenesis GTPase RsgA, found in Clostridium perfringens (strain 13 / Type A).